The sequence spans 677 residues: Envelope glycoprotein (677 aa).

An N-terminal signal peptide occupies residues 1 to 33 (MGSGYQLLQLPRERFRKTSFLVWVIILFQRAIS). Over 34–651 (MPLGIVTNST…DLNLWTGWRQ (618 aa)) the chain is Extracellular. Asparagine 41 is a glycosylation site (N-linked (GlcNAc...) asparagine; by host). Cystine bridges form between cysteine 54-cysteine 610, cysteine 109-cysteine 136, cysteine 122-cysteine 148, cysteine 512-cysteine 557, and cysteine 602-cysteine 609. The interval 55 to 202 (RDKLSSTSQL…HFWKATPAHE (148 aa)) is receptor-binding. 13 N-linked (GlcNAc...) asparagine; by host glycosylation sites follow: asparagine 205, asparagine 229, asparagine 239, asparagine 258, asparagine 269, asparagine 297, asparagine 317, asparagine 318, asparagine 339, asparagine 406, asparagine 420, asparagine 435, and asparagine 463. A mucin-like region region spans residues 306–486 (NLHFQILSTH…PSQPGLTINT (181 aa)). Residues 315–326 (HTNNSSDQSPAG) show a composition bias toward polar residues. 2 disordered regions span residues 315 to 349 (HTNNSSDQSPAGTVQGKISYHPPANNSELVPTDSP) and 361 to 484 (EEMS…GLTI). 2 stretches are compositionally biased toward polar residues: residues 363-423 (MSTQ…NETI) and 432-472 (QGSN…TSPG). The tract at residues 525-540 (GAAVGLAWIPYFGPAA) is fusion peptide. Positions 555–596 (LICGLRQLANETTQALQLFLRATTELRTYSLLNRKAIDFLLQ) form a coiled coil. An N-linked (GlcNAc...) asparagine; by host glycan is attached at asparagine 564. Positions 616–635 (WTKNITDEINQIKHDFIDNP) form a coiled coil. Asparagine 619 is a glycosylation site (N-linked (GlcNAc...) asparagine; by host). A helical membrane pass occupies residues 652-672 (WIPAGIGIIGVIIAIIALLCI). 2 S-palmitoyl cysteine; by host lipidation sites follow: cysteine 671 and cysteine 673. Residues 673–677 (CKILC) lie on the Cytoplasmic side of the membrane.

It belongs to the filoviruses glycoprotein family. In terms of assembly, homotrimer; each monomer consists of a GP1 and a GP2 subunit linked by disulfide bonds. The resulting peplomers (GP1,2) protrude from the virus surface as spikes. Interacts with host integrin alpha-V/ITGAV. Interacts with host CLEC10A. Binds also to host CD209 and CLEC4M/DC-SIGN(R). Interacts with host FOLR1. Interacts with BST2; this interaction inhibits the antiviral effect of BST2 and this allows viral release from infected cells. Interacts with host FCN1; this interaction enhances viral entry. Interacts with host TLR4; this interaction induces cell death in T-lymphocytes or proinflammatory cytokines and SOCS1 production in monocytes. Interacts with host entry receptor NPC1. As to quaternary structure, GP1 and GP2delta are part of GP1,2delta soluble complexes released by ectodomain shedding. In terms of processing, the signal peptide region modulates GP's high mannose glycosylation, thereby determining the efficiency of the interactions with DC-SIGN(R). N-glycosylated. Post-translationally, O-glycosylated in the mucin-like region. In terms of processing, palmitoylation of GP2 is not required for its function. Specific enzymatic cleavages in vivo yield mature proteins. The precursor is processed into GP1 and GP2 by host cell furin in the trans Golgi, and maybe by other host proteases, to yield the mature GP1 and GP2 proteins. The cleavage site corresponds to the furin optimal cleavage sequence [KR]-X-[KR]-R. This cleavage does not seem to be required for function. After the internalization of the virus into cell endosomes, GP1 C-terminus is removed by the endosomal proteases cathepsin B, cathepsin L, or both, leaving a 19-kDa N-terminal fragment which is further digested by cathepsin B. Proteolytic processing of GP1,2 by host ADAM17 can remove the transmembrane anchor of GP2 and leads to shedding of complexes consisting in GP1 and truncated GP2 (GP1,2delta).

It localises to the virion membrane. It is found in the host cell membrane. Its subcellular location is the secreted. In terms of biological role, trimeric GP1,2 complexes form the virion surface spikes and mediate the viral entry processes, with GP1 acting as the receptor-binding subunit and GP2 as the membrane fusion subunit. At later times of infection, down-regulates the expression of various host cell surface molecules that are essential for immune surveillance and cell adhesion. Down-modulates several integrins including ITGA1, ITGA2, ITGA3, ITGA4, ITGA5, ITGA6, ITGAV and ITGB1. This decrease in cell adhesion molecules may lead to cell detachment, contributing to the disruption of blood vessel integrity and hemorrhages developed during infection (cytotoxicity). Interacts with host TLR4 and thereby stimulates the differentiation and activation of monocytes leading to bystander death of T-lymphocytes. Down-regulates as well the function of host natural killer cells. Counteracts the antiviral effect of host BST2/tetherin that restricts release of progeny virions from infected cells. However, cooperates with VP40 and host BST2 to activate canonical NF-kappa-B pathway in a manner dependent on neddylation. Its function is as follows. Functions as a decoy for anti-GP1,2 antibodies thereby contributing to viral immune evasion. Interacts and activates host macrophages and dendritic cells inducing up-regulation of cytokine transcription. This effect is mediated throught activation of host TLR4. Functionally, responsible for binding to the receptor(s) on target cells. Interacts with CD209/DC-SIGN and CLEC4M/DC-SIGNR which act as cofactors for virus entry into dendritic cells (DCs) and endothelial cells. Binding to the macrophage specific lectin CLEC10A also seems to enhance virus infectivity. Interaction with FOLR1/folate receptor alpha may be a cofactor for virus entry in some cell types, although results are contradictory. Members of the Tyro3 receptor tyrosine kinase family also seem to be cell entry factors in filovirus infection. Once attached, the virions are internalized through clathrin-dependent endocytosis and/or macropinocytosis. After internalization of the virus into the endosomes of the host cell, proteolysis of GP1 by two cysteine proteases, CTSB/cathepsin B and CTSL/cathepsin L removes the glycan cap and allows GP1 binding to the host entry receptor NPC1. NPC1-binding, Ca(2+) and acidic pH induce a conformational change of GP2, which unmasks its fusion peptide and permit membranes fusion. Acts as a class I viral fusion protein. Under the current model, the protein has at least 3 conformational states: pre-fusion native state, pre-hairpin intermediate state, and post-fusion hairpin state. During viral and target cell membrane fusion, the coiled coil regions (heptad repeats) assume a trimer-of-hairpins structure, positioning the fusion peptide in close proximity to the C-terminal region of the ectodomain. The formation of this structure appears to drive apposition and subsequent fusion of viral and target cell membranes. Responsible for penetration of the virus into the cell cytoplasm by mediating the fusion of the membrane of the endocytosed virus particle with the endosomal membrane. Low pH in endosomes induces an irreversible conformational change in GP2, releasing the fusion hydrophobic peptide. This is Envelope glycoprotein (GP) from Reston ebolavirus (strain Reston-89) (REBOV).